The chain runs to 266 residues: 15-hydroxyprostaglandin dehydrogenase [NAD(+)] (266 aa).

NAD(+) is bound by residues 12-20 (GAAQGIGRA), 36-37 (DW), 63-65 (CDV), and Asn-91. 2 residues coordinate substrate: Ser-138 and Gln-148. The active-site Proton acceptor is Tyr-151. Residues 151 to 155 (YCASK) and 186 to 188 (VDT) contribute to the NAD(+) site.

This sequence belongs to the short-chain dehydrogenases/reductases (SDR) family. Homodimer.

It is found in the cytoplasm. It catalyses the reaction prostaglandin E2 + NAD(+) = 15-oxoprostaglandin E2 + NADH + H(+). The catalysed reaction is (15S)-hydroxy-(5Z,8Z,11Z,13E)-eicosatetraenoate + NAD(+) = 15-oxo-(5Z,8Z,11Z,13E)-eicosatetraenoate + NADH + H(+). It carries out the reaction (11R)-hydroxy-(5Z,8Z,12E,14Z)-eicosatetraenoate + NAD(+) = 11-oxo-(5Z,8Z,12E,14Z)-eicosatetraenoate + NADH + H(+). The enzyme catalyses lipoxin A4 + NAD(+) = 15-oxo-(5S,6R)-dihydroxy-(7E,9E,11Z,13E)-eicosatetraenoate + NADH + H(+). It catalyses the reaction 15-oxo-(5S,6R)-dihydroxy-(7E,9E,11Z)-eicosatrienoate + NADH + H(+) = (5S,6R,15S)-trihydroxy-(7E,9E,11Z)-eicosatrienoate + NAD(+). The catalysed reaction is prostaglandin A1 + NAD(+) = 15-oxo-prostaglandin A1 + NADH + H(+). It carries out the reaction prostaglandin E1 + NAD(+) = 15-oxoprostaglandin E1 + NADH + H(+). The enzyme catalyses 14-hydroxy-(4Z,7Z,10Z,12E,16Z,19Z)-docosahexaenoate + NAD(+) = 14-oxo-(4Z,7Z,10Z,12E,16Z,19Z)-docosahexaenoate + NADH + H(+). It catalyses the reaction resolvin E1 + NAD(+) = 18-oxo-resolvin E1 + NADH + H(+). The catalysed reaction is resolvin D1 + NAD(+) = 8-oxoresolvin D1 + NADH + H(+). It carries out the reaction resolvin D1 + NAD(+) = 17-oxoresolvin D1 + NADH + H(+). The enzyme catalyses resolvin D2 + NAD(+) = 7-oxoresolvin D2 + NADH + H(+). It catalyses the reaction resolvin D2 + NAD(+) = 16-oxoresolvin D2 + NADH + H(+). Its function is as follows. Catalyzes the NAD-dependent dehydrogenation (oxidation) of a broad array of hydroxylated polyunsaturated fatty acids (mainly eicosanoids and docosanoids, including prostaglandins, lipoxins and resolvins), yielding their corresponding keto (oxo) metabolites. Decreases the levels of the pro-proliferative prostaglandins such as prostaglandin E2 (whose activity is increased in cancer because of an increase in the expression of cyclooxygenase 2) and generates oxo-fatty acid products that can profoundly influence cell function by abrogating pro-inflammatory cytokine expression. Converts resolvins E1, D1 and D2 to their oxo products, which represents a mode of resolvin inactivation. Resolvin E1 plays important roles during the resolution phase of acute inflammation, while resolvins D1 and D2 have a unique role in obesity-induced adipose inflammation. This Bos taurus (Bovine) protein is 15-hydroxyprostaglandin dehydrogenase [NAD(+)] (HPGD).